We begin with the raw amino-acid sequence, 684 residues long: Fermitin family homolog 2 (684 aa).

An interaction with membranes containing phosphatidylinositol phosphate region spans residues 40–81; it reads HIGGVMLKLVEKLDVKKDWSDHALWWEKKKTWLLKTHWTLDK. Residues 141–163 are disordered; sequence LRKPRDPKKKKKKLEDAEEETLE. An FERM domain is found at 279–577; that stretch reads DLNPKYDAIR…SLPEFGITHF (299 aa). The 97-residue stretch at 378–474 folds into the PH domain; the sequence is KVFKPKKLTL…WMAACRLASK (97 aa). An a 1,2-diacyl-sn-glycero-3-phospho-(1D-myo-inositol-3,4,5-trisphosphate)-binding site is contributed by Lys-381.

This sequence belongs to the kindlin family.

The protein localises to the cytoplasm. It localises to the cell cortex. Its subcellular location is the cytoskeleton. The protein resides in the stress fiber. It is found in the cell junction. The protein localises to the focal adhesion. It localises to the membrane. Its subcellular location is the cell projection. The protein resides in the lamellipodium membrane. It is found in the nucleus. The protein localises to the myofibril. It localises to the sarcomere. Its subcellular location is the i band. The protein resides in the cell surface. In terms of biological role, scaffolding protein that enhances integrin activation mediated by TLN1 and/or TLN2, but activates integrins only weakly by itself. Binds to membranes enriched in phosphoinositides. Enhances integrin-mediated cell adhesion onto the extracellular matrix and cell spreading; this requires both its ability to interact with integrins and with phospholipid membranes. Required for the assembly of focal adhesions. Participates in the connection between extracellular matrix adhesion sites and the actin cytoskeleton and also in the orchestration of actin assembly and cell shape modulation. Plays a role in the TGFB1 and integrin signaling pathways. Stabilizes active CTNNB1 and plays a role in the regulation of transcription mediated by CTNNB1 and TCF7L2/TCF4 and in Wnt signaling. Required for normal embryonic development, including normal heart morphogenesis and normal angiogenesis. This is Fermitin family homolog 2 (fermt2) from Danio rerio (Zebrafish).